A 365-amino-acid chain; its full sequence is Bifunctional chorismate mutase/prephenate dehydratase (365 aa).

The 96-residue stretch at 1–96 (MADQDQLKAL…SCLALEQPLK (96 aa)) folds into the Chorismate mutase domain. Substrate is bound by residues Arg11, Arg28, Lys39, and Glu57. Residues 97–272 (VAYLGPEGTF…NSTRFLIIGN (176 aa)) form the Prephenate dehydratase domain. An ACT domain is found at 284 to 361 (SIIVSMRNKP…VALKVLGSYP (78 aa)).

The protein localises to the cytoplasm. It catalyses the reaction chorismate = prephenate. It carries out the reaction prephenate + H(+) = 3-phenylpyruvate + CO2 + H2O. It participates in amino-acid biosynthesis; L-phenylalanine biosynthesis; phenylpyruvate from prephenate: step 1/1. The protein operates within metabolic intermediate biosynthesis; prephenate biosynthesis; prephenate from chorismate: step 1/1. Its function is as follows. Catalyzes the Claisen rearrangement of chorismate to prephenate and the decarboxylation/dehydration of prephenate to phenylpyruvate. The polypeptide is Bifunctional chorismate mutase/prephenate dehydratase (pheA) (Pseudomonas aeruginosa (strain ATCC 15692 / DSM 22644 / CIP 104116 / JCM 14847 / LMG 12228 / 1C / PRS 101 / PAO1)).